The chain runs to 634 residues: 1-deoxy-D-xylulose-5-phosphate synthase (634 aa).

Thiamine diphosphate contacts are provided by residues H77 and 118–120 (GHA). D149 contacts Mg(2+). Thiamine diphosphate contacts are provided by residues 150 to 151 (AS), N178, Y289, and E371. Residue N178 participates in Mg(2+) binding.

It belongs to the transketolase family. DXPS subfamily. In terms of assembly, homodimer. Mg(2+) serves as cofactor. It depends on thiamine diphosphate as a cofactor.

It carries out the reaction D-glyceraldehyde 3-phosphate + pyruvate + H(+) = 1-deoxy-D-xylulose 5-phosphate + CO2. Its pathway is metabolic intermediate biosynthesis; 1-deoxy-D-xylulose 5-phosphate biosynthesis; 1-deoxy-D-xylulose 5-phosphate from D-glyceraldehyde 3-phosphate and pyruvate: step 1/1. Catalyzes the acyloin condensation reaction between C atoms 2 and 3 of pyruvate and glyceraldehyde 3-phosphate to yield 1-deoxy-D-xylulose-5-phosphate (DXP). This is 1-deoxy-D-xylulose-5-phosphate synthase from Leptospira interrogans serogroup Icterohaemorrhagiae serovar copenhageni (strain Fiocruz L1-130).